A 510-amino-acid chain; its full sequence is Membrane-bound transcription factor site-2 protease (510 aa).

Topologically, residues 1 to 3 (MIP) are cytoplasmic. The chain crosses the membrane as a helical span at residues 4–24 (VSLVVVVVGGWTAVYLADLVL). Residues 25–74 (KSSVYFKHSYEDWLEKNGLSISPFHIRWQTSVFNRAFYSWGRRKARMLYQ) are Lumenal-facing. 2 consecutive transmembrane segments (helical) span residues 75–95 (WFNF…FLLG) and 96–107 (KTLMQTLAQMMA). Over 108-135 (DSPSSSSSSSSSSSSSSSSSIHNEQVLQ) the chain is Lumenal. Residues 136-160 (VVVPGINLPVNQLTYFFAAVLISGV) traverse the membrane as a helical segment. Position 162 (H162) interacts with Zn(2+). The active site involves E163. 3 consecutive transmembrane segments (helical) span residues 165–177 (GHGI…QVRF), 178–200 (NGFG…TTHL), and 220–242 (FVLA…PFYY). H166 contacts Zn(2+). At 243 to 437 (TGVGVLITEV…LPVIVETFVK (195 aa)) the chain is on the lumenal side. N-linked (GlcNAc...) asparagine glycosylation is present at N328. 2 helical membrane passes run 438 to 455 (YLIS…VPCF) and 456 to 467 (ALDGQWILNSFL). Topologically, residues 468–483 (DATLTSVIGDNDVKDL) are lumenal. Residues 484–504 (IGFFILLGGSVLLAANVTLGL) traverse the membrane as a helical segment. Over 505-510 (WMVTAR) the chain is Cytoplasmic.

It belongs to the peptidase M50A family. The cofactor is Zn(2+).

It localises to the membrane. Its subcellular location is the cytoplasm. The protein resides in the golgi apparatus membrane. It catalyses the reaction Cleaves several transcription factors that are type-2 transmembrane proteins within membrane-spanning domains. Known substrates include sterol regulatory element-binding protein (SREBP) -1, SREBP-2 and forms of the transcriptional activator ATF6. SREBP-2 is cleaved at the site 477-DRSRILL-|-CVLTFLCLSFNPLTSLLQWGGA-505. The residues Asn-Pro, 11 residues distal to the site of cleavage in the membrane-spanning domain, are important for cleavage by S2P endopeptidase. Replacement of either of these residues does not prevent cleavage, but there is no cleavage if both of these residues are replaced.. In terms of biological role, zinc metalloprotease that mediates intramembrane proteolysis of proteins such as ATF6, ATF6B, SREBF1/SREBP1 and SREBF2/SREBP2. Catalyzes the second step in the proteolytic activation of the sterol regulatory element-binding proteins (SREBPs) SREBF1/SREBP1 and SREBF2/SREBP2: cleaves SREBPs within the first transmembrane segment, thereby releasing the N-terminal segment with a portion of the transmembrane segment attached. Mature N-terminal SREBP fragments shuttle to the nucleus and activate gene transcription. Also mediates the second step in the proteolytic activation of the cyclic AMP-dependent transcription factor ATF-6 (ATF6 and ATF6B). Involved in intramembrane proteolysis during bone formation. In astrocytes and osteoblasts, upon DNA damage and ER stress, mediates the second step of the regulated intramembrane proteolytic activation of the transcription factor CREB3L1, leading to the inhibition of cell-cycle progression. In Cricetulus griseus (Chinese hamster), this protein is Membrane-bound transcription factor site-2 protease (MBTPS2).